The sequence spans 483 residues: Siroheme synthase (483 aa).

The interval 1-203 (MNYFPIFANL…RQNTLAEREL (203 aa)) is precorrin-2 dehydrogenase /sirohydrochlorin ferrochelatase. NAD(+) is bound by residues 22–23 (AV) and 43–44 (KH). A Phosphoserine modification is found at Ser-128. The interval 217 to 483 (GSVSLVGAGP…GGLNAGQRAA (267 aa)) is uroporphyrinogen-III C-methyltransferase. Pro-226 contributes to the S-adenosyl-L-methionine binding site. The active-site Proton acceptor is the Asp-249. Lys-271 (proton donor) is an active-site residue. S-adenosyl-L-methionine is bound by residues 302–304 (GGD), Val-307, 332–333 (TA), Met-384, and Gly-413.

The protein in the N-terminal section; belongs to the precorrin-2 dehydrogenase / sirohydrochlorin ferrochelatase family. This sequence in the C-terminal section; belongs to the precorrin methyltransferase family.

It catalyses the reaction uroporphyrinogen III + 2 S-adenosyl-L-methionine = precorrin-2 + 2 S-adenosyl-L-homocysteine + H(+). It carries out the reaction precorrin-2 + NAD(+) = sirohydrochlorin + NADH + 2 H(+). The enzyme catalyses siroheme + 2 H(+) = sirohydrochlorin + Fe(2+). It functions in the pathway cofactor biosynthesis; adenosylcobalamin biosynthesis; precorrin-2 from uroporphyrinogen III: step 1/1. The protein operates within cofactor biosynthesis; adenosylcobalamin biosynthesis; sirohydrochlorin from precorrin-2: step 1/1. It participates in porphyrin-containing compound metabolism; siroheme biosynthesis; precorrin-2 from uroporphyrinogen III: step 1/1. Its pathway is porphyrin-containing compound metabolism; siroheme biosynthesis; siroheme from sirohydrochlorin: step 1/1. It functions in the pathway porphyrin-containing compound metabolism; siroheme biosynthesis; sirohydrochlorin from precorrin-2: step 1/1. Its function is as follows. Multifunctional enzyme that catalyzes the SAM-dependent methylations of uroporphyrinogen III at position C-2 and C-7 to form precorrin-2 via precorrin-1. Then it catalyzes the NAD-dependent ring dehydrogenation of precorrin-2 to yield sirohydrochlorin. Finally, it catalyzes the ferrochelation of sirohydrochlorin to yield siroheme. The protein is Siroheme synthase of Neisseria meningitidis serogroup B (strain ATCC BAA-335 / MC58).